Reading from the N-terminus, the 216-residue chain is Protein Syd (216 aa).

It belongs to the Syd family.

The protein localises to the cell inner membrane. Functionally, interacts with the SecY protein in vivo. May bind preferentially to an uncomplexed state of SecY, thus functioning either as a chelating agent for excess SecY in the cell or as a regulatory factor that negatively controls the translocase function. The sequence is that of Protein Syd from Shewanella sp. (strain W3-18-1).